Consider the following 392-residue polypeptide: MKSLRELELAGKRVLVRVDFNVPMDDKQRITDDIRIRMVLPTLRYVLEQGGRLIICSHMGRPKGKRVEEYSLAPIARHLAGLLGRDVGIAPDCIGAEVEAQVAALGVGEVLLLQNLRFYGEETENDAVFAGKLAGLADVYVNDAFAVSHRAHASVVGVAERVAEKCAGFLLQTEIDYFHKSMNDPIRPLVALVGGAKVSSKIGALENMLGKVDKMIIGGAMANTFLMSQGVDVGASKVEDDLLVTARNFLQAAGERGMKVYLPVDFVVADRFAADAVHKTVPADSVPEGWMALDVGPASSILFREALQGAGTIVWNGPMGAFEMDAFAGGTMSLCRDVAASQALSITGGGDSNAAVKKSGEADNISYMSTGGGAFLQLMEGKTLPGVDALEA.

Substrate is bound by residues 19-21 (DFN), arginine 35, 58-61 (HMGR), arginine 117, and arginine 150. ATP contacts are provided by residues lysine 201, glutamate 323, and 349–352 (GGDS).

This sequence belongs to the phosphoglycerate kinase family. In terms of assembly, monomer.

It is found in the cytoplasm. It catalyses the reaction (2R)-3-phosphoglycerate + ATP = (2R)-3-phospho-glyceroyl phosphate + ADP. It participates in carbohydrate degradation; glycolysis; pyruvate from D-glyceraldehyde 3-phosphate: step 2/5. The chain is Phosphoglycerate kinase from Desulfotalea psychrophila (strain LSv54 / DSM 12343).